Reading from the N-terminus, the 347-residue chain is SUMO-activating enzyme subunit 1 (347 aa).

It belongs to the ubiquitin-activating E1 family. In terms of assembly, heterodimer of sae1 and uba2/sae2. The heterodimer corresponds to the two domains that are encoded on a single polypeptide chain in ubiquitin-activating enzyme E1. Interacts with ube2i.

Its subcellular location is the nucleus. It functions in the pathway protein modification; protein sumoylation. Its function is as follows. The heterodimer acts as an E1 ligase for sumo1, sumo2, and sumo3. It mediates ATP-dependent activation of sumo proteins followed by formation of a thioester bond between a sumo protein and a conserved active site cysteine residue on uba2/sae2. This Xenopus tropicalis (Western clawed frog) protein is SUMO-activating enzyme subunit 1 (sae1).